Consider the following 400-residue polypeptide: DNA polymerase IV (400 aa).

Positions 5 to 187 (IFLVDMNAFF…LPVEFMNGIG (183 aa)) constitute a UmuC domain. Mg(2+) contacts are provided by Asp9 and Asp105. Glu106 is an active-site residue.

It belongs to the DNA polymerase type-Y family. Monomer. Requires Mg(2+) as cofactor.

The protein localises to the cytoplasm. The catalysed reaction is DNA(n) + a 2'-deoxyribonucleoside 5'-triphosphate = DNA(n+1) + diphosphate. Its function is as follows. Poorly processive, error-prone DNA polymerase involved in untargeted mutagenesis. Copies undamaged DNA at stalled replication forks, which arise in vivo from mismatched or misaligned primer ends. These misaligned primers can be extended by PolIV. Exhibits no 3'-5' exonuclease (proofreading) activity. May be involved in translesional synthesis, in conjunction with the beta clamp from PolIII. This is DNA polymerase IV from Clostridium kluyveri (strain ATCC 8527 / DSM 555 / NBRC 12016 / NCIMB 10680 / K1).